The following is a 626-amino-acid chain: Basic helix-loop-helix ARNT-like protein 1 (626 aa).

Residues 1–60 (MADQRMDISSTISDFMSPGPTDLLSSSLGTSGVDCNRKRKGSSTDYQESMDTDKDDPHGR) are disordered. A Phosphoserine; by GSK3-beta modification is found at S17. Residues 17 to 32 (SPGPTDLLSSSLGTSG) are compositionally biased toward low complexity. At T21 the chain carries Phosphothreonine; by GSK3-beta. The short motif at 36 to 41 (NRKRKG) is the Nuclear localization signal element. Basic and acidic residues predominate over residues 51–60 (DTDKDDPHGR). A bHLH domain is found at 72–125 (NAREAHSQIEKRRRDKMNSFIDELASLVPTCNAMSRKLDKLTVLRMAVQHMKTL). S78 is modified (phosphoserine). Position 90 is a phosphoserine; by CK2 (S90). The short motif at 142-152 (LSDDELKHLIL) is the Nuclear export signal 1 element. The PAS 1 domain maps to 143 to 215 (SDDELKHLIL…EQLSSSDTAP (73 aa)). K252 participates in a covalent cross-link: Glycyl lysine isopeptide (Lys-Gly) (interchain with G-Cter in SUMO2 and SUMO3). Residue K259 forms a Glycyl lysine isopeptide (Lys-Gly) (interchain with G-Cter in SUMO2) linkage. The PAS 2 domain maps to 326–396 (PQPVNGEIRV…ECHRQVLQTR (71 aa)). The Nuclear export signal 2 motif lies at 361 to 369 (LAYLPQELL). In terms of domain architecture, PAC spans 401–444 (TNCYKFKIKDGSFITLRSRWFSFMNPWTKEVEYIVSTNTVVLAN). Disordered stretches follow at residues 458–493 (ASPHSMDSMLPSGEGGPKRTHPTVPGIPGGTRAGAG) and 511–595 (GSSP…SPSN). Over residues 484-493 (IPGGTRAGAG) the composition is skewed to gly residues. The segment at 508–588 (RIRGSSPSSC…IGIDMIDNDQ (81 aa)) is interaction with CIART. Low complexity predominate over residues 511-521 (GSSPSSCGSSP). K538 carries the N6-acetyllysine modification.

As to quaternary structure, component of the circadian clock oscillator which includes the CRY1/2 proteins, CLOCK or NPAS2,BMAL1 or BMAL2, CSNK1D and/or CSNK1E, TIMELESS and the PER1/2/3 proteins. Forms a heterodimer with CLOCK. The CLOCK-BMAL1 heterodimer is required for E-box-dependent transactivation, for CLOCK nuclear translocation and degradation, and, for phosphorylation of both CLOCK and BMAL1. Part of a nuclear complex which also includes RACK1 and PRKCA; RACK1 and PRKCA are recruited to the complex in a circadian manner. Interacts with NPAS2. Interacts with EZH2. Interacts with SUMO3. Interacts with SIRT1. Interacts with AHR. Interacts with ID1, ID2 and ID3. Interacts with DDX4. Interacts with OGT. Interacts with EED and SUZ12. Interacts with MTA1. Interacts with CIART. Interacts with HSP90. Interacts with KAT2B and EP300. Interacts with BHLHE40/DEC1 and BHLHE41/DEC2. Interacts with RELB and the interaction is enhanced in the presence of CLOCK. Interacts with PER1, PER2, CRY1 and CRY2 and this interaction requires a translocation to the nucleus. Interaction of the CLOCK-BMAL1 heterodimer with PER or CRY inhibits transcription activation. Interaction of the CLOCK-BMAL1 with CRY1 is independent of DNA but with PER2 is off DNA. The CLOCK-BMAL1 heterodimer interacts with GSK3B. Interacts with KDM5A. Interacts with KMT2A; in a circadian manner. Interacts with UBE3A. Interacts with PRKCG. Interacts with MAGEL2. Interacts with NCOA2. Interacts with THRAP3. The CLOCK-BMAL1 heterodimer interacts with PASD1. Interacts with PASD1. Interacts with USP9X. Interacts with PIWIL2 (via PIWI domain). Interacts with HDAC3. Interacts with HNF4A. In terms of processing, ubiquitinated, leading to its proteasomal degradation. Deubiquitinated by USP9X. Post-translationally, O-glycosylated; contains O-GlcNAc. O-glycosylation by OGT prevents protein degradation by inhibiting ubiquitination. It also stabilizes the CLOCK-BMAL1 heterodimer thereby increasing CLOCK-BMAL1-mediated transcription of genes in the negative loop of the circadian clock such as PER1/2/3 and CRY1/2. Acetylated on Lys-538 by CLOCK during the repression phase of the circadian cycle. Acetylation facilitates recruitment of CRY1 protein and initiates the repression phase of the circadian cycle. Acetylated at Lys-538 by KAT5 during the activation phase of the cycle, leading to recruitment of the positive transcription elongation factor b (P-TEFb) and BRD4, followed by productive elongation of circadian transcripts. Deacetylated by SIRT1, which may result in decreased protein stability. In terms of processing, phosphorylated upon dimerization with CLOCK. Phosphorylation enhances the transcriptional activity, alters the subcellular localization and decreases the stability of the CLOCK-BMAL1 heterodimer by promoting its degradation. Phosphorylation shows circadian variations in the liver with a peak between CT10 to CT14. Phosphorylation at Ser-90 by CK2 is essential for its nuclear localization, its interaction with CLOCK and controls CLOCK nuclear entry. Dephosphorylation at Ser-78 is important for dimerization with CLOCK and transcriptional activity. Post-translationally, sumoylated on Lys-259 upon dimerization with CLOCK. Predominantly conjugated to poly-SUMO2/3 rather than SUMO1 and the level of these conjugates undergo rhythmic variation, peaking at CT9-CT12. Sumoylation localizes it exclusively to the PML body and promotes its ubiquitination in the PML body, ubiquitin-dependent proteasomal degradation and the transcriptional activity of the CLOCK-BMAL1 heterodimer. Undergoes lysosome-mediated degradation in a time-dependent manner in the liver. Hair follicles (at protein level). Highly expressed in the adult brain, skeletal muscle and heart.

It is found in the nucleus. The protein resides in the cytoplasm. The protein localises to the PML body. There is conflicting data about the effect of NAD cofactors on activity. PubMed:11441146 suggests that the redox state of the cell can modulate the transcriptional activity of the CLOCK-BMAL1 heterodimer; NADH and NADPH enhance the DNA-binding activity of the heterodimer. PubMed:23229515 reports that NADH and NADPH have no significant effect on DNA-binding activity of the CLOCK-BMAL1 heterodimer. Transcriptional activator which forms a core component of the circadian clock. The circadian clock, an internal time-keeping system, regulates various physiological processes through the generation of approximately 24 hour circadian rhythms in gene expression, which are translated into rhythms in metabolism and behavior. It is derived from the Latin roots 'circa' (about) and 'diem' (day) and acts as an important regulator of a wide array of physiological functions including metabolism, sleep, body temperature, blood pressure, endocrine, immune, cardiovascular, and renal function. Consists of two major components: the central clock, residing in the suprachiasmatic nucleus (SCN) of the brain, and the peripheral clocks that are present in nearly every tissue and organ system. Both the central and peripheral clocks can be reset by environmental cues, also known as Zeitgebers (German for 'timegivers'). The predominant Zeitgeber for the central clock is light, which is sensed by retina and signals directly to the SCN. The central clock entrains the peripheral clocks through neuronal and hormonal signals, body temperature and feeding-related cues, aligning all clocks with the external light/dark cycle. Circadian rhythms allow an organism to achieve temporal homeostasis with its environment at the molecular level by regulating gene expression to create a peak of protein expression once every 24 hours to control when a particular physiological process is most active with respect to the solar day. Transcription and translation of core clock components (CLOCK, NPAS2, BMAL1, BMAL2, PER1, PER2, PER3, CRY1 and CRY2) plays a critical role in rhythm generation, whereas delays imposed by post-translational modifications (PTMs) are important for determining the period (tau) of the rhythms (tau refers to the period of a rhythm and is the length, in time, of one complete cycle). A diurnal rhythm is synchronized with the day/night cycle, while the ultradian and infradian rhythms have a period shorter and longer than 24 hours, respectively. Disruptions in the circadian rhythms contribute to the pathology of cardiovascular diseases, cancer, metabolic syndromes and aging. A transcription/translation feedback loop (TTFL) forms the core of the molecular circadian clock mechanism. Transcription factors, CLOCK or NPAS2 and BMAL1 or BMAL2, form the positive limb of the feedback loop, act in the form of a heterodimer and activate the transcription of core clock genes and clock-controlled genes (involved in key metabolic processes), harboring E-box elements (5'-CACGTG-3') within their promoters. The core clock genes: PER1/2/3 and CRY1/2 which are transcriptional repressors form the negative limb of the feedback loop and interact with the CLOCK|NPAS2-BMAL1|BMAL2 heterodimer inhibiting its activity and thereby negatively regulating their own expression. This heterodimer also activates nuclear receptors NR1D1/2 and RORA/B/G, which form a second feedback loop and which activate and repress BMAL1 transcription, respectively. BMAL1 positively regulates myogenesis and negatively regulates adipogenesis via the transcriptional control of the genes of the canonical Wnt signaling pathway. Plays a role in normal pancreatic beta-cell function; regulates glucose-stimulated insulin secretion via the regulation of antioxidant genes NFE2L2/NRF2 and its targets SESN2, PRDX3, CCLC and CCLM. Negatively regulates the mTORC1 signaling pathway; regulates the expression of MTOR and DEPTOR. Controls diurnal oscillations of Ly6C inflammatory monocytes; rhythmic recruitment of the PRC2 complex imparts diurnal variation to chemokine expression that is necessary to sustain Ly6C monocyte rhythms. Regulates the expression of HSD3B2, STAR, PTGS2, CYP11A1, CYP19A1 and LHCGR in the ovary and also the genes involved in hair growth. Plays an important role in adult hippocampal neurogenesis by regulating the timely entry of neural stem/progenitor cells (NSPCs) into the cell cycle and the number of cell divisions that take place prior to cell-cycle exit. Regulates the circadian expression of CIART and KLF11. The CLOCK-BMAL1 heterodimer regulates the circadian expression of SERPINE1/PAI1, VWF, B3, CCRN4L/NOC, NAMPT, DBP, MYOD1, PPARGC1A, PPARGC1B, SIRT1, GYS2, F7, NGFR, GNRHR, BHLHE40/DEC1, ATF4, MTA1, KLF10 and also genes implicated in glucose and lipid metabolism. Promotes rhythmic chromatin opening, regulating the DNA accessibility of other transcription factors. The NPAS2-BMAL1 heterodimer positively regulates the expression of MAOA, F7 and LDHA and modulates the circadian rhythm of daytime contrast sensitivity by regulating the rhythmic expression of adenylate cyclase type 1 (ADCY1) in the retina. The preferred binding motif for the CLOCK-BMAL1 heterodimer is 5'-CACGTGA-3', which contains a flanking adenine nucleotide at the 3-prime end of the canonical 6-nucleotide E-box sequence. CLOCK specifically binds to the half-site 5'-CAC-3', while BMAL1 binds to the half-site 5'-GTGA-3'. The CLOCK-BMAL1 heterodimer also recognizes the non-canonical E-box motifs 5'-AACGTGA-3' and 5'-CATGTGA-3'. Essential for the rhythmic interaction of CLOCK with ASS1 and plays a critical role in positively regulating CLOCK-mediated acetylation of ASS1. Plays a role in protecting against lethal sepsis by limiting the expression of immune checkpoint protein CD274 in macrophages in a PKM2-dependent manner. Regulates the diurnal rhythms of skeletal muscle metabolism via transcriptional activation of genes promoting triglyceride synthesis (DGAT2) and metabolic efficiency (COQ10B). In terms of biological role, (Microbial infection) Regulates SARS coronavirus-2/SARS-CoV-2 entry and replication in lung epithelial cells probably through the post-transcriptional regulation of ACE2 and interferon-stimulated gene expression. The polypeptide is Basic helix-loop-helix ARNT-like protein 1 (Homo sapiens (Human)).